Reading from the N-terminus, the 311-residue chain is Meiotically up-regulated gene 146 protein (311 aa).

It is found in the cytoplasm. The protein resides in the nucleus. Its function is as follows. Has a role in sporulation. The chain is Meiotically up-regulated gene 146 protein (mug146) from Schizosaccharomyces pombe (strain 972 / ATCC 24843) (Fission yeast).